Consider the following 719-residue polypeptide: Phosphoribosylformylglycinamidine synthase subunit PurL (719 aa).

The active site involves H47. ATP contacts are provided by Y50 and K89. E91 is a binding site for Mg(2+). Substrate contacts are provided by residues 92-95 (SHNH) and R114. The active-site Proton acceptor is the H93. Mg(2+) is bound at residue D115. Residue Q238 participates in substrate binding. D266 lines the Mg(2+) pocket. 310 to 312 (ESQ) contacts substrate. ATP-binding residues include D488 and G525. N526 contributes to the Mg(2+) binding site. S528 contributes to the substrate binding site.

Belongs to the FGAMS family. In terms of assembly, monomer. Part of the FGAM synthase complex composed of 1 PurL, 1 PurQ and 2 PurS subunits.

The protein resides in the cytoplasm. The catalysed reaction is N(2)-formyl-N(1)-(5-phospho-beta-D-ribosyl)glycinamide + L-glutamine + ATP + H2O = 2-formamido-N(1)-(5-O-phospho-beta-D-ribosyl)acetamidine + L-glutamate + ADP + phosphate + H(+). Its pathway is purine metabolism; IMP biosynthesis via de novo pathway; 5-amino-1-(5-phospho-D-ribosyl)imidazole from N(2)-formyl-N(1)-(5-phospho-D-ribosyl)glycinamide: step 1/2. Functionally, part of the phosphoribosylformylglycinamidine synthase complex involved in the purines biosynthetic pathway. Catalyzes the ATP-dependent conversion of formylglycinamide ribonucleotide (FGAR) and glutamine to yield formylglycinamidine ribonucleotide (FGAM) and glutamate. The FGAM synthase complex is composed of three subunits. PurQ produces an ammonia molecule by converting glutamine to glutamate. PurL transfers the ammonia molecule to FGAR to form FGAM in an ATP-dependent manner. PurS interacts with PurQ and PurL and is thought to assist in the transfer of the ammonia molecule from PurQ to PurL. This Roseobacter denitrificans (strain ATCC 33942 / OCh 114) (Erythrobacter sp. (strain OCh 114)) protein is Phosphoribosylformylglycinamidine synthase subunit PurL.